The sequence spans 1220 residues: Diacylglycerol kinase delta (1220 aa).

Positions Met-1–Gly-47 are disordered. A regulates association with membranes region spans residues Met-1 to Lys-52. Positions Ala-7 to Glu-22 are enriched in pro residues. One can recognise a PH domain in the interval Thr-53–Asn-146. Phorbol-ester/DAG-type zinc fingers lie at residues Met-163–Cys-213 and Pro-235–Cys-286. The DAGKc domain occupies Ser-317–Tyr-451. Residues Asp-554 to Cys-584 are disordered. An SAM domain is found at Trp-1151–Ser-1214.

The protein belongs to the eukaryotic diacylglycerol kinase family. As to quaternary structure, homooligomer. Monomer. Interacts with AP2A2; regulates clathrin-dependent endocytosis. As to expression, widely expressed.

It is found in the cell membrane. Its subcellular location is the membrane. The protein localises to the clathrin-coated pit. It localises to the cytoplasm. It catalyses the reaction a 1,2-diacyl-sn-glycerol + ATP = a 1,2-diacyl-sn-glycero-3-phosphate + ADP + H(+). It carries out the reaction 1,2-di-(9Z-octadecenoyl)-sn-glycerol + ATP = 1,2-di-(9Z-octadecenoyl)-sn-glycero-3-phosphate + ADP + H(+). The enzyme catalyses 1-octadecanoyl-2-(5Z,8Z,11Z,14Z-eicosatetraenoyl)-sn-glycerol + ATP = 1-octadecanoyl-2-(5Z,8Z,11Z,14Z-eicosatetraenoyl)-sn-glycero-3-phosphate + ADP + H(+). The protein operates within lipid metabolism; glycerolipid metabolism. In terms of biological role, diacylglycerol kinase that converts diacylglycerol/DAG into phosphatidic acid/phosphatidate/PA and regulates the respective levels of these two bioactive lipids. Thereby, acts as a central switch between the signaling pathways activated by these second messengers with different cellular targets and opposite effects in numerous biological processes. By controlling the levels of diacylglycerol, regulates for instance the PKC and EGF receptor signaling pathways and plays a crucial role during development. May also regulate clathrin-dependent endocytosis. This chain is Diacylglycerol kinase delta, found in Mus musculus (Mouse).